Consider the following 55-residue polypeptide: ATP synthase F(0) complex subunit 8 (55 aa).

The chain crosses the membrane as a helical span at residues 7 to 29; that stretch reads NPWFYIMLMSWLTFSLIIQPELL.

Belongs to the ATPase protein 8 family. Component of the ATP synthase complex composed at least of ATP5F1A/subunit alpha, ATP5F1B/subunit beta, ATP5MC1/subunit c (homooctomer), MT-ATP6/subunit a, MT-ATP8/subunit 8, ATP5ME/subunit e, ATP5MF/subunit f, ATP5MG/subunit g, ATP5MK/subunit k, ATP5MJ/subunit j, ATP5F1C/subunit gamma, ATP5F1D/subunit delta, ATP5F1E/subunit epsilon, ATP5PF/subunit F6, ATP5PB/subunit b, ATP5PD/subunit d, ATP5PO/subunit OSCP. ATP synthase complex consists of a soluble F(1) head domain (subunits alpha(3) and beta(3)) - the catalytic core - and a membrane F(0) domain - the membrane proton channel (subunits c, a, 8, e, f, g, k and j). These two domains are linked by a central stalk (subunits gamma, delta, and epsilon) rotating inside the F1 region and a stationary peripheral stalk (subunits F6, b, d, and OSCP).

It is found in the mitochondrion membrane. Its function is as follows. Subunit 8, of the mitochondrial membrane ATP synthase complex (F(1)F(0) ATP synthase or Complex V) that produces ATP from ADP in the presence of a proton gradient across the membrane which is generated by electron transport complexes of the respiratory chain. ATP synthase complex consist of a soluble F(1) head domain - the catalytic core - and a membrane F(1) domain - the membrane proton channel. These two domains are linked by a central stalk rotating inside the F(1) region and a stationary peripheral stalk. During catalysis, ATP synthesis in the catalytic domain of F(1) is coupled via a rotary mechanism of the central stalk subunits to proton translocation. In vivo, can only synthesize ATP although its ATP hydrolase activity can be activated artificially in vitro. Part of the complex F(0) domain. The chain is ATP synthase F(0) complex subunit 8 from Musophaga violacea (Violet turaco).